A 70-amino-acid polypeptide reads, in one-letter code: Conotoxin Ep11.12 (70 aa).

An N-terminal signal peptide occupies residues 1–26; it reads MMFRVTSVGCFLLVILSLNLVVLTNA. Intrachain disulfides connect Cys-27/Cys-41, Cys-34/Cys-46, Cys-40/Cys-50, and Cys-45/Cys-54. Pro-57 carries the post-translational modification Proline amide. Residues 61 to 70 constitute a propeptide that is removed on maturation; it reads AKLREFFRQR.

The protein belongs to the conotoxin I2 superfamily. In terms of tissue distribution, expressed by the venom duct.

It localises to the secreted. The polypeptide is Conotoxin Ep11.12 (Conus episcopatus (Bishop's cone)).